Here is a 487-residue protein sequence, read N- to C-terminus: Proline--tRNA ligase (487 aa).

This sequence belongs to the class-II aminoacyl-tRNA synthetase family. ProS type 3 subfamily. In terms of assembly, homodimer.

It is found in the cytoplasm. It catalyses the reaction tRNA(Pro) + L-proline + ATP = L-prolyl-tRNA(Pro) + AMP + diphosphate. Its function is as follows. Catalyzes the attachment of proline to tRNA(Pro) in a two-step reaction: proline is first activated by ATP to form Pro-AMP and then transferred to the acceptor end of tRNA(Pro). In Pyrobaculum calidifontis (strain DSM 21063 / JCM 11548 / VA1), this protein is Proline--tRNA ligase.